Consider the following 630-residue polypeptide: GATA-type transcription factor SRE1 (630 aa).

Disordered regions lie at residues 1–139 and 162–203; these read MTGL…TPLW and DRPT…RLTD. Composition is skewed to polar residues over residues 66-82, 115-133, and 175-196; these read DNTQGDGSRNMDSQLQN, KAQSKEQAFTGHSCSNCGT, and YGSSSAQTLDKSRSSTSPTNDG. The GATA-type 1 zinc finger occupies 128–152; it reads CSNCGTKRTPLWRRSPTGATICNAC. The tract at residues 219 to 237 is cystein-rich region (CRR); the sequence is CPGGGSCNGTGGAEGCDGC. Residues 256-283 are disordered; sequence HTPRTSPQVSTQGGPGSTEGDAGSSNPE. A compositionally biased stretch (polar residues) spans 258-267; sequence PRTSPQVSTQ. The GATA-type 2 zinc finger occupies 291–315; sequence CQNCQTTVTPLWRRDENGHPICNAC. Residues 339-609 form a disordered region; the sequence is KRVVPAMREQ…AKAERRARLQ (271 aa). Residues 349 to 363 are compositionally biased toward polar residues; the sequence is SPPSATQSSNGSVSP. Composition is skewed to low complexity over residues 436–447 and 492–503; these read NNHNNGETTNTH and SSSSASFPNNNP. Polar residues predominate over residues 504-513; it reads GRFNSISSLL. A compositionally biased stretch (low complexity) spans 558–568; the sequence is SHSPPRFSPSL. Basic and acidic residues predominate over residues 595 to 609; that stretch reads VDHRDAKAERRARLQ. Positions 595-630 form a coiled coil; sequence VDHRDAKAERRARLQREAQDMREALKAKERELALLE.

The protein resides in the nucleus. Its function is as follows. GATA-type transcription repressor that regulates iron- acquisition genes through specific binding the GATA sequence element 5'-(G/A)ATC(T/A)GATAA-3' of target promoters in an iron- and zinc-dependent manner. Regulation occurs via direct binding of iron ions. Iron acquisition regulation is critical for survival under both iron-limiting conditions (to acquire essential iron) and iron-replete conditions (to limit iron toxicity). SRE1 targets include genes encoding a number of key iron-regulated factors such as those involved in siderophore biosynthesis, presumed ferric reductase activity, iron-responsive transcriptional regulation, oxidative stress response, as well as genes encoding a number of putative oxidoreductases, metabolic and mitochondrial enzymes, superoxide dismutase, and genes previously identified as induced during nitrosative stress. The protein is GATA-type transcription factor SRE1 of Ajellomyces capsulatus (Darling's disease fungus).